The chain runs to 416 residues: Ribulose bisphosphate carboxylase large chain (416 aa).

Position 5 is an N6,N6,N6-trimethyllysine (lysine 5). Asparagine 114 and threonine 164 together coordinate substrate. The active-site Proton acceptor is the lysine 166. Lysine 168 provides a ligand contact to substrate. Mg(2+)-binding residues include lysine 192, aspartate 194, and glutamate 195. Lysine 192 is modified (N6-carboxylysine). Residue histidine 285 is the Proton acceptor of the active site. Residues arginine 286, histidine 318, and serine 370 each coordinate substrate.

Belongs to the RuBisCO large chain family. Type I subfamily. As to quaternary structure, heterohexadecamer of 8 large chains and 8 small chains; disulfide-linked. The disulfide link is formed within the large subunit homodimers. The cofactor is Mg(2+). Post-translationally, the disulfide bond which can form in the large chain dimeric partners within the hexadecamer appears to be associated with oxidative stress and protein turnover.

The protein localises to the plastid. It is found in the chloroplast. The catalysed reaction is 2 (2R)-3-phosphoglycerate + 2 H(+) = D-ribulose 1,5-bisphosphate + CO2 + H2O. It carries out the reaction D-ribulose 1,5-bisphosphate + O2 = 2-phosphoglycolate + (2R)-3-phosphoglycerate + 2 H(+). In terms of biological role, ruBisCO catalyzes two reactions: the carboxylation of D-ribulose 1,5-bisphosphate, the primary event in carbon dioxide fixation, as well as the oxidative fragmentation of the pentose substrate in the photorespiration process. Both reactions occur simultaneously and in competition at the same active site. The sequence is that of Ribulose bisphosphate carboxylase large chain (rbcL) from Spigelia marilandica (Woodland pinkroot).